We begin with the raw amino-acid sequence, 507 residues long: MSILSPRQQQELNRAIVQYIGKIISDNSENLEHGEKNGVLQHQDLVDKVANLLDVPTSSEDLTTNYLEKKWSTVLRLQRKIMDLTDEVSNLKTIIEAKHANGGSEISKDKINWLPTSVFKTFPTQTHQSVNTVAVHPYLPLIMAGCSDGTLSVWNIANDDPSIPEKSIRAHSRAVNRIRWSNSPVELSVKAGASNKSYIFASCSSDLSIKIWDGNSNSQIRILTGHDHTVSSIAFSPSKPSILYSVSRDKTTKIWDSTNGYCTRTFIGHSDWVRDLDVIAAKQKSLGDFILTCSNDQSVRLSHADSGTGLCLLVGHSHVIESVRFLPMHSNAHIDKYLKENSDRFPSMPPELVSAPIYDDVLGYKYCVSAGRDNIVKLWLMPPAVVRPNAHPLPAATNNSQGWHIADLTGHQSWVKTLQVHPNGRFIFSAGDDKSIRVWDLSTLATGGRVTEVKKLMKHEGFVNDINAAPLSEPKDTTNEDILQDIESRMRCVFVSGGTDNTVRLWS.

Positions 72–98 (STVLRLQRKIMDLTDEVSNLKTIIEAK) form a coiled coil. 7 WD repeats span residues 125 to 164 (QTHQ…PSIP), 170 to 222 (AHSR…QIRI), 225 to 265 (GHDH…CTRT), 268 to 312 (GHSD…GLCL), 315 to 389 (GHSH…VRPN), 410 to 449 (GHQS…TGGR), and 474 to 507 (PKDT…RLWS).

It belongs to the WD repeat LIS1/nudF family. Self-associates. Interacts with NDL1 and dynein.

It is found in the cytoplasm. It localises to the cytoskeleton. The protein resides in the spindle pole. Its function is as follows. Positively regulates the activity of the minus-end directed microtubule motor protein dynein. Plays a central role in positioning the mitotic spindle at the bud neck during cell division. Targets cytoplasmic dynein to microtubule plus ends, thereby promoting dynein-mediated microtubule sliding along the bud cortex and consequently the movement of the mitotic spindle to the bud neck. The protein is Nuclear distribution protein PAC1 of Meyerozyma guilliermondii (strain ATCC 6260 / CBS 566 / DSM 6381 / JCM 1539 / NBRC 10279 / NRRL Y-324) (Yeast).